The following is a 140-amino-acid chain: Fatty acid-binding protein 12 (140 aa).

Residues Arg-107 and 127-129 (RTY) contribute to the a fatty acid site.

This sequence belongs to the calycin superfamily. Fatty-acid binding protein (FABP) family. As to expression, expressed in a number of retinoblastoma cell lines.

May play a role in lipid transport. This is Fatty acid-binding protein 12 (FABP12) from Homo sapiens (Human).